The primary structure comprises 127 residues: Protein YwpG (127 aa).

In terms of assembly, interacts with both the D1 and D2 domains of dynamin-like protein DynA.

Its subcellular location is the cell membrane. This is Protein YwpG (ywpG) from Bacillus subtilis (strain 168).